The following is a 191-amino-acid chain: MKINGNEIRPGNVIEHQGSLWVAVKCNAVKPGKGGAFNQVEMKNLIDGTKLNERFRAAETVERVRLEQKDFTFLYQQGDALIFMDSQSYEQLELQKDFVGERAAFLQDGMTVTVELYQEKPIGISLPDQVSVTIVEADPALKGQTVTASYKPAILENGIRILVPPFINAGERIIVDTNELIYVRRANEKDK.

Belongs to the elongation factor P family.

It is found in the cytoplasm. It functions in the pathway protein biosynthesis; polypeptide chain elongation. Functionally, involved in peptide bond synthesis. Stimulates efficient translation and peptide-bond synthesis on native or reconstituted 70S ribosomes in vitro. Probably functions indirectly by altering the affinity of the ribosome for aminoacyl-tRNA, thus increasing their reactivity as acceptors for peptidyl transferase. In Bartonella henselae (strain ATCC 49882 / DSM 28221 / CCUG 30454 / Houston 1) (Rochalimaea henselae), this protein is Elongation factor P.